An 896-amino-acid polypeptide reads, in one-letter code: Alanine--tRNA ligase (896 aa).

4 residues coordinate Zn(2+): histidine 581, histidine 585, cysteine 684, and histidine 688.

It belongs to the class-II aminoacyl-tRNA synthetase family. It depends on Zn(2+) as a cofactor.

The protein localises to the cytoplasm. It carries out the reaction tRNA(Ala) + L-alanine + ATP = L-alanyl-tRNA(Ala) + AMP + diphosphate. Its function is as follows. Catalyzes the attachment of alanine to tRNA(Ala) in a two-step reaction: alanine is first activated by ATP to form Ala-AMP and then transferred to the acceptor end of tRNA(Ala). Also edits incorrectly charged Ser-tRNA(Ala) and Gly-tRNA(Ala) via its editing domain. The protein is Alanine--tRNA ligase of Renibacterium salmoninarum (strain ATCC 33209 / DSM 20767 / JCM 11484 / NBRC 15589 / NCIMB 2235).